The chain runs to 489 residues: NF-kappa-B inhibitor cactus (489 aa).

Residues 1 to 26 (MPSPTKAAEAATKATATSDCSCSAAS) are compositionally biased toward low complexity. Disordered stretches follow at residues 1 to 138 (MPSP…SMRL) and 163 to 203 (NNLG…APPS). Position 45 is a phosphoserine; by PKC (Ser45). Positions 69 to 86 (NETSDSGFISGPQSSQIC) are enriched in polar residues. The residue at position 135 (Ser135) is a Phosphoserine; by PKC. A compositionally biased stretch (polar residues) spans 163–180 (NNLGQSSSTQITGRSKFQ). Phosphothreonine; by PKC is present on Thr174. The span at 181-203 (SSTASTANANPSGXGATSSAPPS) shows a compositional bias: low complexity. 5 ANK repeats span residues 220–252 (DGDT…LLNI), 256–285 (VAQT…EVRD), 287–316 (HGNT…ATEI), 350–379 (DGER…DINA), and 384–413 (SGRT…KLNL). The residue at position 308 (Thr308) is a Phosphothreonine; by PKC. At Ser384 the chain carries Phosphoserine; by PKC.

It is found in the cytoplasm. Involved in the formation of the dorsoventral pattern. It inhibits nuclear translocation of the dorsal morphogen in the dorsal region of the embryo. The polypeptide is NF-kappa-B inhibitor cactus (cact) (Drosophila yakuba (Fruit fly)).